The chain runs to 124 residues: T cell receptor beta variable 13 (124 aa).

Residues Met1–Ala31 form the signal peptide. The 93-residue stretch at Gly32–Leu124 folds into the Ig-like domain. Cysteines 52 and 120 form a disulfide. Asn106 carries an N-linked (GlcNAc...) asparagine glycan.

In terms of assembly, alpha-beta TR is a heterodimer composed of an alpha and beta chain; disulfide-linked. The alpha-beta TR is associated with the transmembrane signaling CD3 coreceptor proteins to form the TR-CD3 (TcR or TCR). The assembly of alpha-beta TR heterodimers with CD3 occurs in the endoplasmic reticulum where a single alpha-beta TR heterodimer associates with one CD3D-CD3E heterodimer, one CD3G-CD3E heterodimer and one CD247 homodimer forming a stable octameric structure. CD3D-CD3E and CD3G-CD3E heterodimers preferentially associate with TR alpha and TR beta chains, respectively. The association of the CD247 homodimer is the last step of TcR assembly in the endoplasmic reticulum and is required for transport to the cell surface.

The protein resides in the cell membrane. In terms of biological role, v region of the variable domain of T cell receptor (TR) beta chain that participates in the antigen recognition. Alpha-beta T cell receptors are antigen specific receptors which are essential to the immune response and are present on the cell surface of T lymphocytes. Recognize peptide-major histocompatibility (MH) (pMH) complexes that are displayed by antigen presenting cells (APC), a prerequisite for efficient T cell adaptive immunity against pathogens. Binding of alpha-beta TR to pMH complex initiates TR-CD3 clustering on the cell surface and intracellular activation of LCK that phosphorylates the ITAM motifs of CD3G, CD3D, CD3E and CD247 enabling the recruitment of ZAP70. In turn ZAP70 phosphorylates LAT, which recruits numerous signaling molecules to form the LAT signalosome. The LAT signalosome propagates signal branching to three major signaling pathways, the calcium, the mitogen-activated protein kinase (MAPK) kinase and the nuclear factor NF-kappa-B (NF-kB) pathways, leading to the mobilization of transcription factors that are critical for gene expression and essential for T cell growth and differentiation. The T cell repertoire is generated in the thymus, by V-(D)-J rearrangement. This repertoire is then shaped by intrathymic selection events to generate a peripheral T cell pool of self-MH restricted, non-autoaggressive T cells. Post-thymic interaction of alpha-beta TR with the pMH complexes shapes TR structural and functional avidity. This is T cell receptor beta variable 13 from Homo sapiens (Human).